The chain runs to 327 residues: 4-hydroxyproline 2-epimerase (327 aa).

The Proton acceptor role is filled by Cys-85. Residues 86–87 (GH), His-205, and Asp-231 each bind substrate. Residue Cys-235 is the Proton donor of the active site. 236–237 (GT) serves as a coordination point for substrate.

It belongs to the proline racemase family.

It catalyses the reaction trans-4-hydroxy-L-proline = cis-4-hydroxy-D-proline. In terms of biological role, catalyzes the epimerization of trans-4-hydroxy-L-proline (t4LHyp) to cis-4-hydroxy-D-proline (c4DHyp). Displays no proline racemase activity. In Roseibium alexandrii (strain DSM 17067 / NCIMB 14079 / DFL-11) (Labrenzia alexandrii), this protein is 4-hydroxyproline 2-epimerase.